The chain runs to 156 residues: Ribosome maturation factor RimP (156 aa).

It belongs to the RimP family.

The protein resides in the cytoplasm. In terms of biological role, required for maturation of 30S ribosomal subunits. The chain is Ribosome maturation factor RimP from Prochlorococcus marinus (strain NATL2A).